The sequence spans 789 residues: Cell pattern formation-associated protein stuA (789 aa).

2 disordered regions span residues 50–131 (PALS…NTVG) and 205–224 (PGGVTSSQPGPQPPTTSVSS). 3 stretches are compositionally biased toward polar residues: residues 55-69 (PTASQPPISGQSYRT), 76-88 (ASHNASARTSLSG), and 115-131 (LDSSAPQEFSIPQNTVG). The region spanning 272–378 (RVTATLWEDE…HNIGGLLYHP (107 aa)) is the HTH APSES-type domain. The H-T-H motif DNA-binding region spans 306–327 (GTKLLNVAGMTRGRRDGILKSE). 3 disordered regions span residues 389–459 (QESQ…ASSL), 487–543 (SIDT…YAPQ), and 616–789 (HDSA…ARRR). 5 stretches are compositionally biased toward polar residues: residues 419–438 (LQTPVPSHMSQPHAMTSQSA), 487–529 (SIDT…SKSY), 620–636 (GYNTNRGSYTYTTNPSV), 645–667 (QLASDMSGSPSQQNGSGRMTPRT), and 676–713 (SGYNTPPRSAAVSSLYNSVSETRGASANGTTDNYSVAS). Residues 731–758 (KRMREDDDVDQIVRPDSRGAEYESKRRK) are nuclear localization domain. Over residues 741–754 (QIVRPDSRGAEYES) the composition is skewed to basic and acidic residues.

The protein belongs to the EFG1/PHD1/stuA family.

The protein localises to the nucleus. In terms of biological role, transcription factor that regulates asexual reproduction. Binds the StuA-response elements (StRE) with the consensus sequence 5'-(A/T)CGCG(T/A)N(A/C)-3' at the promoters of target genes. This Aspergillus flavus (strain ATCC 200026 / FGSC A1120 / IAM 13836 / NRRL 3357 / JCM 12722 / SRRC 167) protein is Cell pattern formation-associated protein stuA.